A 124-amino-acid polypeptide reads, in one-letter code: UPF0102 protein Msil_0293 (124 aa).

The protein belongs to the UPF0102 family.

The chain is UPF0102 protein Msil_0293 from Methylocella silvestris (strain DSM 15510 / CIP 108128 / LMG 27833 / NCIMB 13906 / BL2).